A 295-amino-acid polypeptide reads, in one-letter code: Ankyrin repeat and SOCS box protein 17 (295 aa).

The stretch at 146 to 176 is one ANK repeat; the sequence is SGITPLLYVAQTRQSNILKILLQYGILEREN. Positions 232–295 constitute an SOCS box domain; the sequence is LGRRPIISNW…CLQNYLNLES (64 aa).

This sequence belongs to the ankyrin SOCS box (ASB) family.

It participates in protein modification; protein ubiquitination. May be a substrate-recognition component of a SCF-like ECS (Elongin-Cullin-SOCS-box protein) E3 ubiquitin-protein ligase complex which mediates the ubiquitination and subsequent proteasomal degradation of target proteins. The sequence is that of Ankyrin repeat and SOCS box protein 17 (ASB17) from Bos taurus (Bovine).